The chain runs to 229 residues: MTPKLIVALDFDNQDNALQLVDKLDPNHCALKVGSELFTLLGPQFVKELVRREFKVFLDLKFHDIPNTVAKACHSAAELGVWMINVHAIGGLRMLQAARESLKTYGKDRPLLIAVTVLTSFEEGELASVGISNTLPEQATHLAMLAREAGLDGVVSSAHEVKIIKQKCGENFITVTPGIRLPNNLKDDQSRVMTPQQAIREGSDFLVIGRPITQASNPHEVVSALLRDL.

Residues Asp10, Lys32, 59-68, Thr119, Arg180, Gln189, Gly209, and Arg210 contribute to the substrate site; that span reads DLKFHDIPNT. The active-site Proton donor is the Lys61.

This sequence belongs to the OMP decarboxylase family. Type 1 subfamily. In terms of assembly, homodimer.

It catalyses the reaction orotidine 5'-phosphate + H(+) = UMP + CO2. The protein operates within pyrimidine metabolism; UMP biosynthesis via de novo pathway; UMP from orotate: step 2/2. In terms of biological role, catalyzes the decarboxylation of orotidine 5'-monophosphate (OMP) to uridine 5'-monophosphate (UMP). In Legionella pneumophila (strain Paris), this protein is Orotidine 5'-phosphate decarboxylase.